The chain runs to 88 residues: U1-hexatoxin-Iw1d (88 aa).

Positions 1 to 17 (LKFVVLICLVIMASTSA) are cleaved as a signal peptide. Position 18 is a pyrrolidone carboxylic acid (glutamine 18). 5 cysteine pairs are disulfide-bonded: cysteine 20–cysteine 31, cysteine 25–cysteine 39, cysteine 30–cysteine 65, cysteine 49–cysteine 73, and cysteine 67–cysteine 80. Residues 86–88 (RSE) constitute a propeptide that is removed on maturation.

This sequence belongs to the MIT-like AcTx family. In terms of tissue distribution, expressed by the venom gland.

It localises to the secreted. The protein is U1-hexatoxin-Iw1d of Illawarra wisharti (Illawarra funnel-web spider).